A 333-amino-acid polypeptide reads, in one-letter code: L-lactate dehydrogenase A chain (333 aa).

Residue Ala-2 is modified to N-acetylalanine. Residues 30–58 (GAVGMACAISILMKDLADEVALVDVMEDK) and Arg-100 contribute to the NAD(+) site. Substrate-binding residues include Arg-107, Asn-139, and Arg-170. Position 139 (Asn-139) interacts with NAD(+). His-194 functions as the Proton acceptor in the catalytic mechanism. Thr-249 is a binding site for substrate.

This sequence belongs to the LDH/MDH superfamily. LDH family. In terms of assembly, homotetramer.

The protein resides in the cytoplasm. The catalysed reaction is (S)-lactate + NAD(+) = pyruvate + NADH + H(+). It participates in fermentation; pyruvate fermentation to lactate; (S)-lactate from pyruvate: step 1/1. In terms of biological role, interconverts simultaneously and stereospecifically pyruvate and lactate with concomitant interconversion of NADH and NAD(+). This is L-lactate dehydrogenase A chain (ldha) from Squalus acanthias (Spiny dogfish).